The following is a 986-amino-acid chain: Rho guanine nucleotide exchange factor 2 (986 aa).

The Phorbol-ester/DAG-type zinc finger occupies 39–86 (GHLFTTISVSGMTMCYACNKSITAKEALICPTCNVTIHNRCKDTLANC). Ser109, Ser122, Ser129, Ser133, and Ser137 each carry phosphoserine. Residues 131-161 (RQSLLGSRRGRSSLSLAKSVSTTNIAGHFND) form an interaction with DYNLT1 region. Ser143 carries the post-translational modification Phosphoserine; by PAK4. Phosphoserine is present on residues Ser151, Ser163, Ser172, Ser174, and Ser177. Residues 235-432 (KQQDVIYELI…KELLSNVDEG (198 aa)) enclose the DH domain. The residue at position 353 (Lys353) is an N6-acetyllysine. The PH domain occupies 472 to 571 (KLIHDGCLLW…WIRVIQQSVR (100 aa)). Residues 587-611 (EAYLRRIKMELQQKDRALVELLREK) are a coiled coil. Residues Ser645 and Ser648 each carry the phosphoserine modification. Phosphothreonine; by MAPK1 or MAPK3 is present on Thr679. Positions 683-705 (PALPLEPDSGGNTSPGVTANGEA) are disordered. Phosphoserine is present on residues Ser691, Ser696, Ser711, and Ser782. Residues 798 to 867 (EKQATELALL…RQLAALGQTE (70 aa)) adopt a coiled-coil conformation. Residues 862-986 (ALGQTEPLPA…RDGEAVASES (125 aa)) are disordered. Ser886 carries the phosphoserine; by PAK1 and AURKA modification. Tyr894 carries the post-translational modification Phosphotyrosine. Phosphoserine; by PAK4 is present on Ser896. Residues 920 to 939 (RNFEDRERQELGSPEERLQD) show a composition bias toward basic and acidic residues. A phosphoserine mark is found at Ser932, Ser940, and Ser941. Over residues 941–950 (SDPDTGSEEE) the composition is skewed to acidic residues. Thr945 bears the Phosphothreonine mark. Ser947, Ser952, Ser953, Ser956, and Ser960 each carry phosphoserine.

Found in a complex composed at least of ARHGEF2, NOD2 and RIPK2. Interacts with RIPK2; the interaction mediates tyrosine phosphorylation of RIPK2 by Src kinase CSK. Interacts with RIPK1 and RIPK3. Interacts with YWHAZ/14-3-3 zeta; when phosphorylated at Ser-886. Interacts with the kinases PAK4, AURKA and MAPK1. Interacts with RHOA and RAC1. Interacts with NOD1. Interacts (via the N-terminal zinc finger) with CAPN6 (via domain II). Interacts with DYNLT1. In terms of processing, phosphorylation of Ser-886 by PAK1 induces binding to protein YWHAZ, promoting its relocation to microtubules and the inhibition of its activity. Phosphorylated by AURKA and CDK1 during mitosis, which negatively regulates its activity. Phosphorylation by MAPK1 or MAPK3 increases nucleotide exchange activity. Phosphorylation by PAK4 releases GEF-H1 from the microtubules. Phosphorylated on serine, threonine and tyrosine residues in a RIPK2-dependent manner.

The protein resides in the cytoplasm. The protein localises to the cytoskeleton. Its subcellular location is the cell junction. It localises to the tight junction. It is found in the golgi apparatus. The protein resides in the spindle. The protein localises to the cell projection. Its subcellular location is the ruffle membrane. It localises to the cytoplasmic vesicle. Functionally, activates Rho-GTPases by promoting the exchange of GDP for GTP. May be involved in epithelial barrier permeability, cell motility and polarization, dendritic spine morphology, antigen presentation, leukemic cell differentiation, cell cycle regulation, innate immune response, and cancer. Binds Rac-GTPases, but does not seem to promote nucleotide exchange activity toward Rac-GTPases, which was uniquely reported in PubMed:9857026. May stimulate instead the cortical activity of Rac. Inactive toward CDC42, TC10, or Ras-GTPases. Forms an intracellular sensing system along with NOD1 for the detection of microbial effectors during cell invasion by pathogens. Required for RHOA and RIP2 dependent NF-kappaB signaling pathways activation upon S.flexneri cell invasion. Involved not only in sensing peptidoglycan (PGN)-derived muropeptides through NOD1 that is independent of its GEF activity, but also in the activation of NF-kappaB by Shigella effector proteins (IpgB2 and OspB) which requires its GEF activity and the activation of RhoA. Involved in innate immune signaling transduction pathway promoting cytokine IL6/interleukin-6 and TNF-alpha secretion in macrophage upon stimulation by bacterial peptidoglycans; acts as a signaling intermediate between NOD2 receptor and RIPK2 kinase. Contributes to the tyrosine phosphorylation of RIPK2 through Src tyrosine kinase leading to NF-kappaB activation by NOD2. Overexpression activates Rho-, but not Rac-GTPases, and increases paracellular permeability. Involved in neuronal progenitor cell division and differentiation. Involved in the migration of precerebellar neurons. The protein is Rho guanine nucleotide exchange factor 2 (ARHGEF2) of Homo sapiens (Human).